Consider the following 382-residue polypeptide: MIATTGKVNLLGLTQPQLESFFESIGEKRFRAGQVMKWIHHFGVDDFDAMSNLGKALREKLKACAEIRGPEIVSEDISSDGTRKWVVRVASGSCVETVYIPQGGRGTLCVSSQAGCALDCSFCSTGKQGFNSNLTAAEVIGQVWIANKSFGTVPAKIDRAITNVVMMGMGEPLLNFDNVVAAMQIMMDDLGYGISKRKVTLSTSGVVPMIDELAKVIDVSLALSLHAPNEALRDQLVPINKKYPLDVLLAACKRYVSRLGEKRVLTIEYTLLKGVNDQPEHAEQMIALLADIPCKINLIPFNPFPHSGYERPSNNAIRRFQDILHKGGHNVTVRTTRGEDIDAACGQLVGQVLDRTRRSERYIAVRELQSEPGAAQTASNRS.

Glu-96 functions as the Proton acceptor in the catalytic mechanism. In terms of domain architecture, Radical SAM core spans 102–342 (QGGRGTLCVS…VRTTRGEDID (241 aa)). Cysteines 109 and 345 form a disulfide. [4Fe-4S] cluster is bound by residues Cys-116, Cys-120, and Cys-123. S-adenosyl-L-methionine contacts are provided by residues 170–171 (GE), Ser-202, 224–226 (SLH), and Asn-302. The active-site S-methylcysteine intermediate is Cys-345.

This sequence belongs to the radical SAM superfamily. RlmN family. The cofactor is [4Fe-4S] cluster.

The protein resides in the cytoplasm. The catalysed reaction is adenosine(2503) in 23S rRNA + 2 reduced [2Fe-2S]-[ferredoxin] + 2 S-adenosyl-L-methionine = 2-methyladenosine(2503) in 23S rRNA + 5'-deoxyadenosine + L-methionine + 2 oxidized [2Fe-2S]-[ferredoxin] + S-adenosyl-L-homocysteine. It catalyses the reaction adenosine(37) in tRNA + 2 reduced [2Fe-2S]-[ferredoxin] + 2 S-adenosyl-L-methionine = 2-methyladenosine(37) in tRNA + 5'-deoxyadenosine + L-methionine + 2 oxidized [2Fe-2S]-[ferredoxin] + S-adenosyl-L-homocysteine. Its function is as follows. Specifically methylates position 2 of adenine 2503 in 23S rRNA and position 2 of adenine 37 in tRNAs. m2A2503 modification seems to play a crucial role in the proofreading step occurring at the peptidyl transferase center and thus would serve to optimize ribosomal fidelity. In Stutzerimonas stutzeri (strain A1501) (Pseudomonas stutzeri), this protein is Dual-specificity RNA methyltransferase RlmN.